We begin with the raw amino-acid sequence, 283 residues long: 4-diphosphocytidyl-2-C-methyl-D-erythritol kinase (283 aa).

Residue Lys-10 is part of the active site. Residue 99 to 109 participates in ATP binding; that stretch reads PMGGGLGGGSS. Asp-141 is an active-site residue.

The protein belongs to the GHMP kinase family. IspE subfamily. As to quaternary structure, homodimer.

It carries out the reaction 4-CDP-2-C-methyl-D-erythritol + ATP = 4-CDP-2-C-methyl-D-erythritol 2-phosphate + ADP + H(+). Its pathway is isoprenoid biosynthesis; isopentenyl diphosphate biosynthesis via DXP pathway; isopentenyl diphosphate from 1-deoxy-D-xylulose 5-phosphate: step 3/6. Catalyzes the phosphorylation of the position 2 hydroxy group of 4-diphosphocytidyl-2C-methyl-D-erythritol. This Salmonella typhi protein is 4-diphosphocytidyl-2-C-methyl-D-erythritol kinase.